Reading from the N-terminus, the 196-residue chain is Probable malonic semialdehyde reductase RutE (196 aa).

This sequence belongs to the nitroreductase family. HadB/RutE subfamily. FMN is required as a cofactor.

The enzyme catalyses 3-hydroxypropanoate + NADP(+) = 3-oxopropanoate + NADPH + H(+). Functionally, may reduce toxic product malonic semialdehyde to 3-hydroxypropionic acid, which is excreted. In Escherichia coli O157:H7, this protein is Probable malonic semialdehyde reductase RutE.